The following is a 302-amino-acid chain: uncharacterized protein (302 aa).

A disordered region spans residues 1–24 (MTEISELASSSQKPEKTKYNLPKP).

This is an uncharacterized protein from Schizosaccharomyces pombe (strain 972 / ATCC 24843) (Fission yeast).